Here is a 227-residue protein sequence, read N- to C-terminus: MESFEKLEKLLSYSFKNKELLIEALSHPSLRQHHEYKDDKDYERLEFLGDAVLNLVITEILFRNFANYNEGNLAKIRSYLVCKETICMVGAKLTLKNYIIMTHGEEVAGGRDNLNNIENATEALIAAIYLDSNIETTHDIIENLWAEFIKVQNLTDYDPKTALQEWAQASDHHLPIYRLIKREGASHSSTFTVLVKVKDYEQTGTGHTIKEAEKNAARSLLHRLKND.

The RNase III domain occupies 4 to 133 (FEKLEKLLSY…LIAAIYLDSN (130 aa)). Glu46 contacts Mg(2+). Asp50 is a catalytic residue. 2 residues coordinate Mg(2+): Asn119 and Glu122. The active site involves Glu122. The DRBM domain maps to 158–226 (DPKTALQEWA…ARSLLHRLKN (69 aa)).

It belongs to the ribonuclease III family. Homodimer. Requires Mg(2+) as cofactor.

It is found in the cytoplasm. The catalysed reaction is Endonucleolytic cleavage to 5'-phosphomonoester.. Functionally, digests double-stranded RNA. Involved in the processing of primary rRNA transcript to yield the immediate precursors to the large and small rRNAs (23S and 16S). Processes some mRNAs, and tRNAs when they are encoded in the rRNA operon. Processes pre-crRNA and tracrRNA of type II CRISPR loci if present in the organism. This chain is Ribonuclease 3, found in Rickettsia conorii (strain ATCC VR-613 / Malish 7).